The sequence spans 626 residues: Deoxynucleoside triphosphate triphosphohydrolase SAMHD1 (626 aa).

Met-1 bears the N-acetylmethionine mark. Positions 1–19 are enriched in basic and acidic residues; that stretch reads MQRADSEQPSKRPRCDDSP. The disordered stretch occupies residues 1 to 36; the sequence is MQRADSEQPSKRPRCDDSPRTPSNTPSAEADWSPGL. The residue at position 18 (Ser-18) is a Phosphoserine. Residues Thr-21 and Thr-25 each carry the phosphothreonine modification. Phosphoserine is present on residues Ser-33 and Ser-93. The region spanning 45–110 is the SAM domain; that stretch reads WGPEQVCSFL…LSYIQRLVQI (66 aa). Positions 116 and 117 each coordinate GTP. Residue Asn-119 participates in dATP binding. Asn-119 is a dCTP binding site. A dGTP-binding site is contributed by Asn-119. Asn-119 provides a ligand contact to dTTP. GTP contacts are provided by Asp-137, Gln-142, and Arg-145. Gln-149 lines the dATP pocket. Residue Gln-149 coordinates dCTP. Residues Gln-149, Leu-150, Val-156, and Arg-164 each coordinate dGTP. Gln-149 lines the dTTP pocket. Residues Val-156 and Arg-164 each contribute to the dATP site. DCTP is bound by residues Val-156 and Arg-164. Positions 156 and 164 each coordinate dTTP. Residues 164–316 form the HD domain; the sequence is RFEHSLGVGY…GIDVDKWDYF (153 aa). Mn(2+) is bound by residues His-167, His-206, and Asp-207. Residues His-210 and His-215 each contribute to the dATP site. DCTP contacts are provided by His-210 and His-215. The dTTP site is built by His-210 and His-215. The active site involves His-233. Asp-311 lines the Mn(2+) pocket. 8 residues coordinate dATP: Lys-312, Tyr-315, Asp-319, Arg-333, Arg-352, Lys-354, Asn-358, and Arg-366. Residues Lys-312, Tyr-315, Asp-319, Arg-333, Arg-352, and Lys-354 each coordinate dCTP. DGTP contacts are provided by Lys-312, Tyr-315, Asp-319, Arg-333, Arg-352, Lys-354, Asn-358, and Arg-366. The dTTP site is built by Lys-312, Tyr-315, Asp-319, Arg-333, Arg-352, and Lys-354. Residues Arg-366 and Arg-372 each contribute to the dCTP site. 4 residues coordinate dGTP: Tyr-374, Gln-375, His-376, and Lys-377. Residues Gln-375, His-376, and Lys-377 each coordinate dATP. Gln-375, His-376, and Lys-377 together coordinate dCTP. DTTP-binding residues include Gln-375, His-376, and Lys-377. Positions 451 and 455 each coordinate GTP. Glycyl lysine isopeptide (Lys-Gly) (interchain with G-Cter in SUMO2) cross-links involve residues Lys-467, Lys-469, and Lys-492. Lys-523 lines the GTP pocket. A dATP-binding site is contributed by Lys-523. Lys-523 is a dCTP binding site. Lys-523 is a dGTP binding site. Residue Lys-523 coordinates dTTP. Thr-592 is modified ((Microbial infection) Phosphothreonine). Thr-592 carries the phosphothreonine; by CDK1 modification. A Glycyl lysine isopeptide (Lys-Gly) (interchain with G-Cter in SUMO2) cross-link involves residue Lys-622.

This sequence belongs to the SAMHD1 family. Homodimer; in absence of GTP and dNTP. Homotetramer; in GTP- and dNTP-bound form. Interacts with MRE11; leading to stimulate the exonuclease activity of MRE11. Interacts with RBBP8/CtIP. Interacts (via its C-terminus) with CD81. In terms of assembly, (Microbial infection) Interacts with HIV-2 viral protein Vpx; promoting interaction with a E3 ubiquitin-protein ligase complex containing DCAF1, leading to subsequent ubiquitination and degradation of SAMHD1. Requires Mn(2+) as cofactor. In terms of processing, phosphorylation at Thr-592 by CDK1 acts as a switch to control deoxynucleoside triphosphate (dNTPase)-dependent and -independent functions. Phosphorylation at Thr-592 takes place in cycling cells: it reduces the stability of the homotetramer, impairing the dNTPase activity and subsequent ability to restrict infection by viruses. It also inhibits ability to suppress LINE-1 retrotransposon activity. In contrast, phosphorylation at Thr-592 promotes DNA end resection at stalled replication forks in response to DNA damage. Post-translationally, (Microbial infection) Phosphorylation at Thr-592 by Epstein-Barr virus kinase BGLF4 and human cytomegalovirus/HCMV UL97 leads to a reduced level of dCTPase and dTTPase activity and the loss of viral restriction. (Microbial infection) Ubiquitinated following interaction with HIV-2 viral protein Vpx; Vpx promotes interaction and with a DCX (DDB1-CUL4-X-box) E3 ubiquitin ligase, leading to proteasomal degradation. Expressed in heart, skeletal muscle, spleen, liver, small intestine, placenta, lung and peripheral blood leukocytes. No expression is seen in brain and thymus.

It is found in the nucleus. It localises to the chromosome. The catalysed reaction is a 2'-deoxyribonucleoside 5'-triphosphate + H2O = a 2'-deoxyribonucleoside + triphosphate + H(+). The enzyme catalyses dATP + H2O = 2'-deoxyadenosine + triphosphate + H(+). It catalyses the reaction dCTP + H2O = 2'-deoxycytidine + triphosphate + H(+). It carries out the reaction dGTP + H2O = 2'-deoxyguanosine + triphosphate + H(+). The catalysed reaction is dTTP + H2O = thymidine + triphosphate + H(+). With respect to regulation, allosterically activated and regulated via the combined actions of GTP and dNTPs (dATP, dGTP, dTTP and dCTP): Allosteric site 1 binds GTP, while allosteric site 2 binds dNTP. Allosteric activation promotes the formation of highly active homotetramers. Phosphorylation at Thr-592 impairs homotetramerization, thereby inhibiting dNTPase activity, leading to reduced ability to restrict infection by viruses. Its function is as follows. Protein that acts both as a host restriction factor involved in defense response to virus and as a regulator of DNA end resection at stalled replication forks. Has deoxynucleoside triphosphate (dNTPase) activity, which is required to restrict infection by viruses, such as HIV-1: dNTPase activity reduces cellular dNTP levels to levels too low for retroviral reverse transcription to occur, blocking early-stage virus replication in dendritic and other myeloid cells. Likewise, suppresses LINE-1 retrotransposon activity. Not able to restrict infection by HIV-2 virus; because restriction activity is counteracted by HIV-2 viral protein Vpx. In addition to virus restriction, dNTPase activity acts as a regulator of DNA precursor pools by regulating dNTP pools. Phosphorylation at Thr-592 acts as a switch to control dNTPase-dependent and -independent functions: it inhibits dNTPase activity and ability to restrict infection by viruses, while it promotes DNA end resection at stalled replication forks. Functions during S phase at stalled DNA replication forks to promote the resection of gapped or reversed forks: acts by stimulating the exonuclease activity of MRE11, activating the ATR-CHK1 pathway and allowing the forks to restart replication. Its ability to promote degradation of nascent DNA at stalled replication forks is required to prevent induction of type I interferons, thereby preventing chronic inflammation. Ability to promote DNA end resection at stalled replication forks is independent of dNTPase activity. Enhances immunoglobulin hypermutation in B-lymphocytes by promoting transversion mutation. The polypeptide is Deoxynucleoside triphosphate triphosphohydrolase SAMHD1 (Homo sapiens (Human)).